We begin with the raw amino-acid sequence, 432 residues long: Enolase (432 aa).

Gln-167 lines the (2R)-2-phosphoglycerate pocket. The Proton donor role is filled by Glu-209. Asp-246, Glu-287, and Asp-314 together coordinate Mg(2+). (2R)-2-phosphoglycerate is bound by residues Lys-339, Arg-368, Ser-369, and Lys-390. Lys-339 acts as the Proton acceptor in catalysis.

The protein belongs to the enolase family. Mg(2+) serves as cofactor.

Its subcellular location is the cytoplasm. It localises to the secreted. It is found in the cell surface. The enzyme catalyses (2R)-2-phosphoglycerate = phosphoenolpyruvate + H2O. The protein operates within carbohydrate degradation; glycolysis; pyruvate from D-glyceraldehyde 3-phosphate: step 4/5. Catalyzes the reversible conversion of 2-phosphoglycerate (2-PG) into phosphoenolpyruvate (PEP). It is essential for the degradation of carbohydrates via glycolysis. This Prochlorococcus marinus (strain SARG / CCMP1375 / SS120) protein is Enolase.